Reading from the N-terminus, the 244-residue chain is Transcription factor A, mitochondrial (244 aa).

The transit peptide at 1 to 42 directs the protein to the mitochondrion; that stretch reads MALFRGMWGVLRTLGRTGVEMCAGCGGRIPSPVSLICIPKCF. The segment at residues 49–117 is a DNA-binding region (HMG box 1); the sequence is PKKPMSSYLR…VYKEAVSKYK (69 aa). A phosphoserine; by PKA mark is found at Ser-54, Ser-55, and Ser-60. The residue at position 66 (Lys-66) is an N6-succinyllysine. Position 121 is a phosphothreonine (Thr-121). A DNA-binding region (HMG box 2) is located at residues 154 to 218; that stretch reads PKRPRSAYNI…RYDNEMKSWE (65 aa). The residue at position 159 (Ser-159) is a Phosphoserine; by PKA. Phosphoserine is present on Ser-192. The disordered stretch occupies residues 221–244; it reads MAEVGRSDLIRRSVKRPPGDISEN.

As to quaternary structure, monomer; binds DNA as a monomer. Homodimer. Component of the mitochondrial transcription initiation complex, composed at least of TFB2M, TFAM and POLRMT. In this complex TFAM recruits POLRMT to the promoter whereas TFB2M induces structural changes in POLRMT to enable promoter opening and trapping of the DNA non-template strand. Upon metabolic stress, forms a complex composed of FOXO3, SIRT3, TFAM and POLRMT. Interacts with TFB1M and TFB2M. Interacts with CLPX; this enhances DNA-binding. Phosphorylation by PKA within the HMG box 1 impairs DNA binding and promotes degradation by the AAA+ Lon protease. In terms of tissue distribution, the mitochondrial isoform is widely expressed while the nuclear isoform is testis-specific.

It localises to the mitochondrion. The protein resides in the mitochondrion matrix. Its subcellular location is the mitochondrion nucleoid. The protein localises to the nucleus. In terms of biological role, binds to the mitochondrial light strand promoter and functions in mitochondrial transcription regulation. Component of the mitochondrial transcription initiation complex, composed at least of TFB2M, TFAM and POLRMT that is required for basal transcription of mitochondrial DNA. In this complex, TFAM recruits POLRMT to a specific promoter whereas TFB2M induces structural changes in POLRMT to enable promoter opening and trapping of the DNA non-template strand. Required for accurate and efficient promoter recognition by the mitochondrial RNA polymerase. Promotes transcription initiation from the HSP1 and the light strand promoter by binding immediately upstream of transcriptional start sites. Is able to unwind DNA. Bends the mitochondrial light strand promoter DNA into a U-turn shape via its HMG boxes. Required for maintenance of normal levels of mitochondrial DNA. May play a role in organizing and compacting mitochondrial DNA. Functionally, may also function as a transcriptional activator or may have a structural role in the compaction of nuclear DNA during spermatogenesis. The protein is Transcription factor A, mitochondrial of Rattus norvegicus (Rat).